The primary structure comprises 537 residues: CTP synthase (537 aa).

An amidoligase domain region spans residues 1–268 (MNTKYIFVTG…DNLVCKKLKL (268 aa)). S14 contacts CTP. S14 lines the UTP pocket. 15-20 (SLGKGI) is a binding site for ATP. Y55 is a binding site for L-glutamine. Position 72 (D72) interacts with ATP. Mg(2+) contacts are provided by D72 and E142. Residues 149 to 151 (DIE), 189 to 194 (KTKPTQ), and K225 each bind CTP. UTP is bound by residues 189 to 194 (KTKPTQ) and K225. The Glutamine amidotransferase type-1 domain maps to 293-535 (NIALVGKYVE…IKASLNSKHK (243 aa)). Residue G355 participates in L-glutamine binding. Catalysis depends on C382, which acts as the Nucleophile; for glutamine hydrolysis. Residues 383–386 (LGMQ), E406, and R463 each bind L-glutamine. Active-site residues include H508 and E510.

This sequence belongs to the CTP synthase family. As to quaternary structure, homotetramer.

The enzyme catalyses UTP + L-glutamine + ATP + H2O = CTP + L-glutamate + ADP + phosphate + 2 H(+). It catalyses the reaction L-glutamine + H2O = L-glutamate + NH4(+). The catalysed reaction is UTP + NH4(+) + ATP = CTP + ADP + phosphate + 2 H(+). It participates in pyrimidine metabolism; CTP biosynthesis via de novo pathway; CTP from UDP: step 2/2. With respect to regulation, allosterically activated by GTP, when glutamine is the substrate; GTP has no effect on the reaction when ammonia is the substrate. The allosteric effector GTP functions by stabilizing the protein conformation that binds the tetrahedral intermediate(s) formed during glutamine hydrolysis. Inhibited by the product CTP, via allosteric rather than competitive inhibition. Functionally, catalyzes the ATP-dependent amination of UTP to CTP with either L-glutamine or ammonia as the source of nitrogen. Regulates intracellular CTP levels through interactions with the four ribonucleotide triphosphates. The chain is CTP synthase from Clostridium kluyveri (strain ATCC 8527 / DSM 555 / NBRC 12016 / NCIMB 10680 / K1).